A 211-amino-acid chain; its full sequence is ATP phosphoribosyltransferase (211 aa).

The protein belongs to the ATP phosphoribosyltransferase family. Short subfamily. In terms of assembly, heteromultimer composed of HisG and HisZ subunits.

Its subcellular location is the cytoplasm. It catalyses the reaction 1-(5-phospho-beta-D-ribosyl)-ATP + diphosphate = 5-phospho-alpha-D-ribose 1-diphosphate + ATP. Its pathway is amino-acid biosynthesis; L-histidine biosynthesis; L-histidine from 5-phospho-alpha-D-ribose 1-diphosphate: step 1/9. In terms of biological role, catalyzes the condensation of ATP and 5-phosphoribose 1-diphosphate to form N'-(5'-phosphoribosyl)-ATP (PR-ATP). Has a crucial role in the pathway because the rate of histidine biosynthesis seems to be controlled primarily by regulation of HisG enzymatic activity. The polypeptide is ATP phosphoribosyltransferase (Pseudomonas syringae pv. tomato (strain ATCC BAA-871 / DC3000)).